The sequence spans 345 residues: Sesquiterpene synthase PILCRDRAFT_825684 (345 aa).

Residues Asp-91, Asn-226, Ser-230, and Glu-234 each contribute to the Mg(2+) site. Residues 91-95 carry the DDXXD motif motif; sequence DELTD. (2E,6E)-farnesyl diphosphate contacts are provided by Arg-316 and Tyr-317.

Belongs to the terpene synthase family. It depends on Mg(2+) as a cofactor.

It carries out the reaction (2E,6E)-farnesyl diphosphate = viridiflorene + diphosphate. In terms of biological role, terpene cyclase that catalyzes the cyclization of farnesyl diphosphate (FPP) to various sesquiterpenes, including beta-elemene, viridiflorene and gamma-cadinene. Gamma-cadinene is the major product of PILCRDRAFT_825684. This Piloderma croceum (strain F 1598) protein is Sesquiterpene synthase PILCRDRAFT_825684.